The sequence spans 438 residues: 23S rRNA (uracil(1939)-C(5))-methyltransferase RlmD (438 aa).

One can recognise a TRAM domain in the interval 11 to 69; sequence LQPESKHQQVLVEKLDHQGAGIAYLNKKPLFIDGTLPGEEVVTQLTESKSKFARGKLIK. Residues Cys82, Cys88, Cys91, and Cys169 each contribute to the [4Fe-4S] cluster site. Residues Gln272, Phe301, Asn306, Glu322, Asn349, and Asp370 each contribute to the S-adenosyl-L-methionine site. Residue Cys396 is the Nucleophile of the active site.

It belongs to the class I-like SAM-binding methyltransferase superfamily. RNA M5U methyltransferase family. RlmD subfamily.

The catalysed reaction is uridine(1939) in 23S rRNA + S-adenosyl-L-methionine = 5-methyluridine(1939) in 23S rRNA + S-adenosyl-L-homocysteine + H(+). Functionally, catalyzes the formation of 5-methyl-uridine at position 1939 (m5U1939) in 23S rRNA. The protein is 23S rRNA (uracil(1939)-C(5))-methyltransferase RlmD of Vibrio vulnificus (strain CMCP6).